The following is a 592-amino-acid chain: Transmembrane 9 superfamily member 2 (592 aa).

Residues 1 to 24 (MRTPTTILLLVGAILFSGAGYVRS) form the signal peptide. The Lumenal segment spans residues 25–229 (DASDHRYKEG…SLPHHLEIHW (205 aa)). Residues 230-250 (FSIINSCVTVLLLTGFLATIL) form a helical membrane-spanning segment. Topologically, residues 251-302 (MRVLKNDFMKYAQDEEAADDQEETGWKYIHGDVFRFPTHNSLFAASLGSGTQ) are cytoplasmic. Residues 303 to 323 (LFTLTIFIFMLALVGVFYPYN) form a helical membrane-spanning segment. R324 is a topological domain (lumenal). A helical transmembrane segment spans residues 325–345 (GALFTALVVIYALTSGIAGYT). The Cytoplasmic segment spans residues 346 to 362 (SASFYCQLEGKSWVRNL). The chain crosses the membrane as a helical span at residues 363–383 (LLTGCLFCGPLFLTFCFLNTV). Residues 384 to 397 (AITYTATAALPFGT) are Lumenal-facing. A helical transmembrane segment spans residues 398–418 (IVVIVLIWTLVTSPLLVLGGI). Topologically, residues 419-452 (AGKNSKAEFQAPCRTTKYPREIPPLPWYRSAIPQ) are cytoplasmic. Residues 453–473 (MAMAGFLPFSAIYIELYYIFA) traverse the membrane as a helical segment. Residues 474–485 (SVWGHRIYTIYS) lie on the Lumenal side of the membrane. A helical membrane pass occupies residues 486-506 (ILFIVFIILIIVTAFITVALT). The Cytoplasmic segment spans residues 507–521 (YFQLAAEDHQWWWRS). A helical transmembrane segment spans residues 522–542 (FLCGGSTGLFIYAYCLYYYYA). The Lumenal portion of the chain corresponds to 543-553 (RSDMSGFMQTS). Residues 554 to 574 (FFFGYMACICYGFFLMLGTVG) form a helical membrane-spanning segment. The Cytoplasmic segment spans residues 575–592 (FRAALLFVRHIYRSIKCE). The Endoplasmic reticulum export signal motif lies at 581 to 586 (FVRHIY). Positions 590-592 (KCE) match the Golgi retention signal motif.

The protein belongs to the nonaspanin (TM9SF) (TC 9.A.2) family.

Its subcellular location is the endosome membrane. It localises to the golgi apparatus membrane. This is Transmembrane 9 superfamily member 2 from Arabidopsis thaliana (Mouse-ear cress).